Here is a 400-residue protein sequence, read N- to C-terminus: Tryptophan synthase beta chain (400 aa).

Lys90 is subject to N6-(pyridoxal phosphate)lysine.

This sequence belongs to the TrpB family. As to quaternary structure, tetramer of two alpha and two beta chains. Requires pyridoxal 5'-phosphate as cofactor.

The enzyme catalyses (1S,2R)-1-C-(indol-3-yl)glycerol 3-phosphate + L-serine = D-glyceraldehyde 3-phosphate + L-tryptophan + H2O. Its pathway is amino-acid biosynthesis; L-tryptophan biosynthesis; L-tryptophan from chorismate: step 5/5. The beta subunit is responsible for the synthesis of L-tryptophan from indole and L-serine. The polypeptide is Tryptophan synthase beta chain (trpB) (Bacillus subtilis (strain 168)).